Reading from the N-terminus, the 259-residue chain is 5'-nucleotidase SurE (259 aa).

Asp-10, Asp-11, Ser-41, and Asn-96 together coordinate a divalent metal cation.

Belongs to the SurE nucleotidase family. It depends on a divalent metal cation as a cofactor.

The protein localises to the cytoplasm. The enzyme catalyses a ribonucleoside 5'-phosphate + H2O = a ribonucleoside + phosphate. Functionally, nucleotidase that shows phosphatase activity on nucleoside 5'-monophosphates. The polypeptide is 5'-nucleotidase SurE (Wolinella succinogenes (strain ATCC 29543 / DSM 1740 / CCUG 13145 / JCM 31913 / LMG 7466 / NCTC 11488 / FDC 602W) (Vibrio succinogenes)).